A 372-amino-acid chain; its full sequence is Aryl-hydrocarbon-interacting protein-like 1 (372 aa).

One can recognise a PPIase FKBP-type domain in the interval 53–145; the sequence is RQVDQPMHII…DLDELQKEPQ (93 aa). TPR repeat units follow at residues 178-211, 230-263, and 264-297; these read VPVL…LRNL, NTLT…HPGI, and VKAY…EPSM. Positions 315-372 are disordered; it reads KQEEERLRCRNMLSQGATQPPTEPPAEPHTAPPAELSTGPPAEPPAELPLSPGHSLQH. The segment covering 335–345 has biased composition (pro residues); that stretch reads PTEPPAEPHTA.

In terms of assembly, interacts with NUB1.

It localises to the cytoplasm. The protein resides in the nucleus. May be important in protein trafficking and/or protein folding and stabilization. The sequence is that of Aryl-hydrocarbon-interacting protein-like 1 (AIPL1) from Papio cynocephalus (Yellow baboon).